A 351-amino-acid chain; its full sequence is Ribosomal RNA large subunit methyltransferase M (351 aa).

S-adenosyl-L-methionine-binding positions include S186, 219-222 (APGG), D238, D258, and D274. The Proton acceptor role is filled by K303.

It belongs to the class I-like SAM-binding methyltransferase superfamily. RNA methyltransferase RlmE family. RlmM subfamily. In terms of assembly, monomer.

It localises to the cytoplasm. The catalysed reaction is cytidine(2498) in 23S rRNA + S-adenosyl-L-methionine = 2'-O-methylcytidine(2498) in 23S rRNA + S-adenosyl-L-homocysteine + H(+). Functionally, catalyzes the 2'-O-methylation at nucleotide C2498 in 23S rRNA. This is Ribosomal RNA large subunit methyltransferase M from Xylella fastidiosa (strain M23).